A 326-amino-acid polypeptide reads, in one-letter code: F-box/LRR-repeat protein 12 (326 aa).

In terms of domain architecture, F-box spans 1 to 47 (MATLFDLPDLVLLEIFSYLPVRDRIRISRVCHRWKRLVDDRWLWRHV). LRR repeat units follow at residues 51-78 (LYTMRPKVMWHLLRRYMASRLYSLRMGG), 86-111 (APQLSPALMRALGQKCPNLKRLCLHV), 113-133 (DLSMVPITSLPSTLRTLELHS), 161-185 (VPAFRDEHLQGLTRFRALRSLVLGG), 186-211 (TYRVTETGLDASLQELSYLQRLEVLG), 212-236 (CTLSADSTLLAISRHLRDVRKIRLT), 237-261 (VGGLSAQGLVFLEGMPVLESLCFQG), and 266-291 (PDMPTPTQIVSSCLTMPKLRVLEVQG).

In terms of assembly, interacts with SKP1 and CUL1.

It participates in protein modification; protein ubiquitination. In terms of biological role, substrate-recognition component of the SCF (SKP1-CUL1-F-box protein)-type E3 ubiquitin ligase complex. Mediates the polyubiquitination and proteasomal degradation of CAMK1 leading to disruption of cyclin D1/CDK4 complex assembly which results in G1 cell cycle arrest in lung epithelia. The sequence is that of F-box/LRR-repeat protein 12 (Fbxl12) from Mus musculus (Mouse).